The following is a 273-amino-acid chain: Large ribosomal subunit protein uL2 (273 aa).

Positions 228–273 (VDHPHGGGEGKTSGGRHPVTPWGFSTKGKKTRKNKRTSKFIVKKRK) are disordered. The span at 254 to 273 (KGKKTRKNKRTSKFIVKKRK) shows a compositional bias: basic residues.

The protein belongs to the universal ribosomal protein uL2 family. As to quaternary structure, part of the 50S ribosomal subunit. Forms a bridge to the 30S subunit in the 70S ribosome.

Functionally, one of the primary rRNA binding proteins. Required for association of the 30S and 50S subunits to form the 70S ribosome, for tRNA binding and peptide bond formation. It has been suggested to have peptidyltransferase activity; this is somewhat controversial. Makes several contacts with the 16S rRNA in the 70S ribosome. The polypeptide is Large ribosomal subunit protein uL2 (Rickettsia prowazekii (strain Madrid E)).